A 375-amino-acid chain; its full sequence is Stomatin-2 (375 aa).

Residues 1–75 (MKTQPSEESA…IPVPTGQPRG (75 aa)) form a disordered region. The segment covering 11–50 (SPAPVNPGNSGNSGNRRASSTRISFSDQLDGGDSGDSSSN) has biased composition (low complexity). Residues 120-140 (GLGFCGWFLMGLSWIMVISTF) traverse the membrane as a helical segment.

The protein belongs to the band 7/mec-2 family.

The protein localises to the membrane. Functionally, may be involved in cilia-related function. The polypeptide is Stomatin-2 (sto-2) (Caenorhabditis elegans).